Consider the following 260-residue polypeptide: Neuraminyllactose-binding hemagglutinin (260 aa).

Positions 1-27 (MKTNGHFKDFAWKKCFLGASVVALLVG) are cleaved as a signal peptide. Cys-28 carries N-palmitoyl cysteine lipidation. Residue Cys-28 is the site of S-diacylglycerol cysteine attachment.

The protein resides in the cell outer membrane. In Helicobacter pylori (strain J99 / ATCC 700824) (Campylobacter pylori J99), this protein is Neuraminyllactose-binding hemagglutinin (hpaA).